Consider the following 225-residue polypeptide: Uracil-DNA glycosylase 1 (225 aa).

Asp68 acts as the Proton acceptor in catalysis.

The protein belongs to the uracil-DNA glycosylase (UDG) superfamily. UNG family.

The protein resides in the cytoplasm. The catalysed reaction is Hydrolyzes single-stranded DNA or mismatched double-stranded DNA and polynucleotides, releasing free uracil.. Its function is as follows. Excises uracil residues from the DNA which can arise as a result of misincorporation of dUMP residues by DNA polymerase or due to deamination of cytosine. The protein is Uracil-DNA glycosylase 1 (ung1) of Streptomyces avermitilis (strain ATCC 31267 / DSM 46492 / JCM 5070 / NBRC 14893 / NCIMB 12804 / NRRL 8165 / MA-4680).